The following is a 212-amino-acid chain: Regulatory protein RecX (212 aa).

Belongs to the RecX family.

The protein resides in the cytoplasm. Its function is as follows. Modulates RecA activity. In Clostridium botulinum (strain Alaska E43 / Type E3), this protein is Regulatory protein RecX.